Reading from the N-terminus, the 176-residue chain is Cytochrome b561 homolog 1 (176 aa).

Residues Met1–Thr7 lie on the Cytoplasmic side of the membrane. Residues Gln8 to Leu28 form a helical membrane-spanning segment. His12 provides a ligand contact to heme b. Over Arg29–Thr45 the chain is Periplasmic. His46 contributes to the heme b binding site. A helical membrane pass occupies residues His46–Ile63. Topologically, residues Lys64–Ser85 are cytoplasmic. The chain crosses the membrane as a helical span at residues Leu86 to Met106. Topologically, residues Ala107–Trp141 are periplasmic. The heme b site is built by His138 and His152. The helical transmembrane segment at Ala142 to Ile162 threads the bilayer. Residues Gln163–Lys176 are Cytoplasmic-facing.

It belongs to the cytochrome b561 family. Requires heme b as cofactor.

The protein resides in the cell inner membrane. This chain is Cytochrome b561 homolog 1 (yodB), found in Escherichia coli (strain K12).